The chain runs to 60 residues: uncharacterized protein (60 aa).

This is an uncharacterized protein from Enterobacteria phage T4 (Bacteriophage T4).